A 686-amino-acid polypeptide reads, in one-letter code: ATP-dependent zinc metalloprotease FTSH 6, chloroplastic (686 aa).

Polar residues predominate over residues 1-14; that stretch reads MSPTAMSLTTTTSR. Residues 1-52 form a disordered region; it reads MSPTAMSLTTTTSRLPICRAQGGGVAKEKRTTPPPAKITPPSSSSSEAAGLS. A chloroplast-targeting transit peptide spans 1-75; it reads MSPTAMSLTT…LGLTAARPAR (75 aa). Residues 39 to 52 are compositionally biased toward low complexity; sequence TPPSSSSSEAAGLS. A helical membrane pass occupies residues 164-184; the sequence is VMLLDLLVNFGFPLLFVASLL. Residue 261–268 coordinates ATP; sequence GPPGTGKT. Histidine 483 is a Zn(2+) binding site. The active site involves glutamate 484. 2 residues coordinate Zn(2+): histidine 487 and aspartate 562.

It in the N-terminal section; belongs to the AAA ATPase family. This sequence in the C-terminal section; belongs to the peptidase M41 family. It depends on Zn(2+) as a cofactor.

Its subcellular location is the plastid. It localises to the chloroplast thylakoid membrane. Probable ATP-dependent zinc metallopeptidase. The polypeptide is ATP-dependent zinc metalloprotease FTSH 6, chloroplastic (FTSH6) (Oryza sativa subsp. japonica (Rice)).